We begin with the raw amino-acid sequence, 310 residues long: tRNA uridine(34) hydroxylase (310 aa).

The Rhodanese domain occupies 134–232 (DDPDTLLIDT…YFEEVSQSES (99 aa)). The active-site Cysteine persulfide intermediate is Cys-192.

It belongs to the TrhO family.

The enzyme catalyses uridine(34) in tRNA + AH2 + O2 = 5-hydroxyuridine(34) in tRNA + A + H2O. Catalyzes oxygen-dependent 5-hydroxyuridine (ho5U) modification at position 34 in tRNAs. In Prochlorococcus marinus (strain MIT 9303), this protein is tRNA uridine(34) hydroxylase.